Here is a 485-residue protein sequence, read N- to C-terminus: 3-isopropylmalate dehydratase large subunit (485 aa).

Residues C367, C427, and C430 each coordinate [4Fe-4S] cluster. Over residues 439-451 (SPGQRAASTSNRN) the composition is skewed to polar residues. The interval 439–462 (SPGQRAASTSNRNFEGRQGKGGRT) is disordered.

It belongs to the aconitase/IPM isomerase family. LeuC type 1 subfamily. Heterodimer of LeuC and LeuD. [4Fe-4S] cluster serves as cofactor.

The catalysed reaction is (2R,3S)-3-isopropylmalate = (2S)-2-isopropylmalate. It functions in the pathway amino-acid biosynthesis; L-leucine biosynthesis; L-leucine from 3-methyl-2-oxobutanoate: step 2/4. Catalyzes the isomerization between 2-isopropylmalate and 3-isopropylmalate, via the formation of 2-isopropylmaleate. This chain is 3-isopropylmalate dehydratase large subunit, found in Actinoplanes teichomyceticus.